Here is a 239-residue protein sequence, read N- to C-terminus: UDP-2,3-diacylglucosamine hydrolase (239 aa).

Residues D8, H10, D41, N78, and H113 each coordinate Mn(2+). 78-79 (NR) contributes to the substrate binding site. Substrate contacts are provided by D121, S159, N163, K166, and H194. The Mn(2+) site is built by H194 and H196.

It belongs to the LpxH family. Mn(2+) is required as a cofactor.

It localises to the cell inner membrane. The catalysed reaction is UDP-2-N,3-O-bis[(3R)-3-hydroxytetradecanoyl]-alpha-D-glucosamine + H2O = 2-N,3-O-bis[(3R)-3-hydroxytetradecanoyl]-alpha-D-glucosaminyl 1-phosphate + UMP + 2 H(+). The protein operates within glycolipid biosynthesis; lipid IV(A) biosynthesis; lipid IV(A) from (3R)-3-hydroxytetradecanoyl-[acyl-carrier-protein] and UDP-N-acetyl-alpha-D-glucosamine: step 4/6. In terms of biological role, hydrolyzes the pyrophosphate bond of UDP-2,3-diacylglucosamine to yield 2,3-diacylglucosamine 1-phosphate (lipid X) and UMP by catalyzing the attack of water at the alpha-P atom. Involved in the biosynthesis of lipid A, a phosphorylated glycolipid that anchors the lipopolysaccharide to the outer membrane of the cell. The protein is UDP-2,3-diacylglucosamine hydrolase of Shewanella sp. (strain ANA-3).